We begin with the raw amino-acid sequence, 78 residues long: MDFNQEVLSVLAEVCQDDIVKENPDIDIFEEGILDSFGTVELLLAFESHFNITVPITEFDRDAWNTPNQIIKQLNELR.

The region spanning M1–R78 is the Carrier domain. Position 36 is an O-(pantetheine 4'-phosphoryl)serine (S36).

It belongs to the DltC family. In terms of processing, 4'-phosphopantetheine is transferred from CoA to a specific serine of apo-DCP.

It is found in the cytoplasm. Its pathway is cell wall biogenesis; lipoteichoic acid biosynthesis. Functionally, carrier protein involved in the D-alanylation of lipoteichoic acid (LTA). The loading of thioester-linked D-alanine onto DltC is catalyzed by D-alanine--D-alanyl carrier protein ligase DltA. The DltC-carried D-alanyl group is further transferred to cell membrane phosphatidylglycerol (PG) by forming an ester bond, probably catalyzed by DltD. D-alanylation of LTA plays an important role in modulating the properties of the cell wall in Gram-positive bacteria, influencing the net charge of the cell wall. The polypeptide is D-alanyl carrier protein (Bacillus licheniformis (strain ATCC 14580 / DSM 13 / JCM 2505 / CCUG 7422 / NBRC 12200 / NCIMB 9375 / NCTC 10341 / NRRL NRS-1264 / Gibson 46)).